Here is a 419-residue protein sequence, read N- to C-terminus: CDP-diacylglycerol--serine O-phosphatidyltransferase 3 (419 aa).

Residues 1–51 form a disordered region; the sequence is MPVRRRWYPPSSTAAQPSPDGGDVNTDDADACPSSRQQRPPSLPQHSAPIH. Positions 33–47 are enriched in low complexity; that stretch reads PSSRQQRPPSLPQHS. The next 7 helical transmembrane spans lie at 103 to 123, 142 to 162, 168 to 188, 260 to 280, 287 to 307, 359 to 379, and 384 to 404; these read PHTV…SGVL, WAMI…TILI, VWRL…FLLF, LLLW…RHML, WWDS…WAGM, FIQV…TFFL, and WIPP…LIAI.

This sequence belongs to the CDP-alcohol phosphatidyltransferase class-I family.

It is found in the endoplasmic reticulum membrane. It carries out the reaction a CDP-1,2-diacyl-sn-glycerol + L-serine = a 1,2-diacyl-sn-glycero-3-phospho-L-serine + CMP + H(+). It participates in phospholipid metabolism; phosphatidylethanolamine biosynthesis; phosphatidylethanolamine from CDP-diacylglycerol: step 1/2. Catalyzes a base-exchange reaction in which the polar head group of phosphatidylethanolamine (PE) or phosphatidylcholine (PC) is replaced by L-serine. The chain is CDP-diacylglycerol--serine O-phosphatidyltransferase 3 (PSS3) from Oryza sativa subsp. japonica (Rice).